Consider the following 1623-residue polypeptide: Histone-lysine N-methyltransferase set-9 (1623 aa).

5 disordered regions span residues M1–Q102, A112–E131, E198–S227, Q448–P600, and T645–A781. Positions H62–H71 are enriched in basic and acidic residues. Positions E77–P100 are enriched in low complexity. A compositionally biased stretch (polar residues) spans P206–S227. Residues M554 to P573 are compositionally biased toward basic and acidic residues. Over residues P587–V597 the composition is skewed to pro residues. The segment covering T645–Y669 has biased composition (polar residues). A compositionally biased stretch (basic residues) spans H723 to R733. Over residues S772–A781 the composition is skewed to acidic residues. The PHD-type zinc finger occupies T786–R834. A disordered region spans residues A857 to R895. A compositionally biased stretch (polar residues) spans K873–K882. The region spanning M965 to D1056 is the SET domain. Composition is skewed to basic and acidic residues over residues A1089 to E1157 and A1172 to R1194. 2 disordered regions span residues A1089–P1318 and L1356–N1623. The stretch at R1093 to S1201 forms a coiled coil. Residues T1242–T1252 are compositionally biased toward polar residues. Residues A1282–A1293 are compositionally biased toward low complexity. A coiled-coil region spans residues F1364–E1401. Basic and acidic residues-rich tracts occupy residues S1365–K1378, K1388–N1406, K1413–P1429, and K1447–S1464. The segment covering S1533–A1544 has biased composition (polar residues).

The protein belongs to the class V-like SAM-binding methyltransferase superfamily. As to expression, predominantly expressed in the germline (at protein level).

It localises to the nucleus. The catalysed reaction is L-lysyl-[histone] + S-adenosyl-L-methionine = N(6)-methyl-L-lysyl-[histone] + S-adenosyl-L-homocysteine + H(+). In terms of biological role, histone methyltransferase. Might play a role in transcriptional regulation. Together with set-26, negatively regulates lifespan in a germline-independent, partially daf-16-dependent fashion. Together with set-26, plays a role in germline development and maintenance and might play a role in the restriction of the trimethylation mark on histone H3 'Lys-4'(H3K4me3) to target genes specifically in the germline. This is Histone-lysine N-methyltransferase set-9 from Caenorhabditis elegans.